We begin with the raw amino-acid sequence, 214 residues long: Orotate phosphoribosyltransferase (214 aa).

A 5-phospho-alpha-D-ribose 1-diphosphate-binding site is contributed by K26. 34–35 (FF) contributes to the orotate binding site. 5-phospho-alpha-D-ribose 1-diphosphate-binding positions include 72–73 (YK), R99, K100, K103, H105, and 124–132 (DDVITAGTA). 2 residues coordinate orotate: T128 and R156.

This sequence belongs to the purine/pyrimidine phosphoribosyltransferase family. PyrE subfamily. In terms of assembly, homodimer. The cofactor is Mg(2+).

The enzyme catalyses orotidine 5'-phosphate + diphosphate = orotate + 5-phospho-alpha-D-ribose 1-diphosphate. The protein operates within pyrimidine metabolism; UMP biosynthesis via de novo pathway; UMP from orotate: step 1/2. Its function is as follows. Catalyzes the transfer of a ribosyl phosphate group from 5-phosphoribose 1-diphosphate to orotate, leading to the formation of orotidine monophosphate (OMP). In Mannheimia succiniciproducens (strain KCTC 0769BP / MBEL55E), this protein is Orotate phosphoribosyltransferase.